The following is a 132-amino-acid chain: Small ribosomal subunit protein uS8 (132 aa).

The protein belongs to the universal ribosomal protein uS8 family. As to quaternary structure, part of the 30S ribosomal subunit. Contacts proteins S5 and S12.

In terms of biological role, one of the primary rRNA binding proteins, it binds directly to 16S rRNA central domain where it helps coordinate assembly of the platform of the 30S subunit. This is Small ribosomal subunit protein uS8 from Oceanobacillus iheyensis (strain DSM 14371 / CIP 107618 / JCM 11309 / KCTC 3954 / HTE831).